Reading from the N-terminus, the 418-residue chain is MKDSFVVTGGTRLQGAIKVSGAKNSVLKLMSAALLAPGTTMLTNCPEIADVPYMAEVLRGLGCEVELDGDVVRITTPESIEYNADFEAVRQFRASVAVLGPLTSRCHKARVALPGGDAIGSRPLDMHQSGLELLGATTKIEHGCLVAEAEELRGAQIKLDFPSVGATENILTAAVLAEGTTTLDNAAREPEIVDLCNMLVAMGAKIDGAGSNTITVEGVDRLNPVDHEVVGDRIVAGTWAYAAAMTRGDITVGGIDPQHLHLVLEKLKLAGAQVETYPTGFRVVQNERPKAVDYQTLPFPGFPTDLQPMAIALCTVSEGMSVITENIFESRFRFVDEMMRLGADASIDGHHVVIRGREQLSSAPVWSSDIRAGAGLVLAGLVADGKTEVHDVYHIDRGYPEFPEQLRSLGAEVERVQR.

Lys-23–Asn-24 is a binding site for phosphoenolpyruvate. Arg-93 is a binding site for UDP-N-acetyl-alpha-D-glucosamine. The active-site Proton donor is the Asp-117. Asp-305 and Ile-327 together coordinate UDP-N-acetyl-alpha-D-glucosamine.

It belongs to the EPSP synthase family. MurA subfamily.

It is found in the cytoplasm. It catalyses the reaction phosphoenolpyruvate + UDP-N-acetyl-alpha-D-glucosamine = UDP-N-acetyl-3-O-(1-carboxyvinyl)-alpha-D-glucosamine + phosphate. The protein operates within cell wall biogenesis; peptidoglycan biosynthesis. Functionally, cell wall formation. Adds enolpyruvyl to UDP-N-acetylglucosamine. The polypeptide is UDP-N-acetylglucosamine 1-carboxyvinyltransferase (Corynebacterium jeikeium (strain K411)).